We begin with the raw amino-acid sequence, 374 residues long: Ras-related GTP-binding protein B (374 aa).

Methionine 1 carries the N-acetylmethionine modification. Residues 1–15 (MEESDSEKKTEKENV) show a composition bias toward basic and acidic residues. Positions 1–30 (MEESDSEKKTEKENVGPKVEPPLGEPEGSL) are disordered. Positions 49 and 50 each coordinate GTP. 8 residues coordinate GDP: glycine 50, serine 51, glycine 52, lysine 53, threonine 54, serine 55, threonine 69, and threonine 75. Residues glycine 52, lysine 53, threonine 54, serine 55, threonine 69, threonine 75, glycine 126, and histidine 188 each contribute to the GTP site. GDP-binding residues include histidine 188 and aspartate 191. Residue lysine 203 forms a Glycyl lysine isopeptide (Lys-Gly) (interchain with G-Cter in ubiquitin) linkage. Residues leucine 209 and isoleucine 225 each contribute to the GDP site. Isoleucine 225 lines the GTP pocket. Glycyl lysine isopeptide (Lys-Gly) (interchain with G-Cter in ubiquitin) cross-links involve residues lysine 281, lysine 291, and lysine 305.

It belongs to the GTR/RAG GTP-binding protein family. In terms of assembly, interacts with RRAGC and RRAGD; heterodimerization stabilizes RRAG proteins. The GTP-bound form of RRAGB (in complex with the GDP-bound form of RRAGC or RRAGD) interacts with RPTOR, thereby promoting recruitment of mTORC1 to the lysosomes. Component of the lysosomal folliculin complex (LFC), composed of FLCN, FNIP1 (or FNIP2), RagA/RRAGA or RagB/RRAGB GDP-bound, RagC/RRAGC or RagD/RRAGD GTP-bound, and Ragulator. Interacts with SH3BP4; the interaction with this negative regulator is most probably direct, preferentially occurs with the inactive GDP-bound form of RRAGB, is negatively regulated by amino acids and prevents interaction with RPTOR. Interacts with the GATOR1 complex; inactivates RRAGB. The Rag heterodimer interacts with SLC38A9; the probable amino acid sensor. Interacts with SESN1, SESN2 and SESN3.

Its subcellular location is the cytoplasm. The protein resides in the lysosome membrane. The catalysed reaction is GTP + H2O = GDP + phosphate + H(+). Its activity is regulated as follows. The activation of GTP-binding proteins is generally mediated by a guanine exchange factor (GEF), while inactivation through hydrolysis of bound GTP is catalyzed by a GTPase activating protein (GAP). The Ragulator complex functions as a GEF and promotes the active GTP-bound form. The GATOR1 complex functions as a GAP and stimulates RRAGB GTPase activity to turn it into its inactive GDP-bound form, preventing mTORC1 recruitment and activation. Its function is as follows. Guanine nucleotide-binding protein that plays a crucial role in the cellular response to amino acid availability through regulation of the mTORC1 signaling cascade. Forms heterodimeric Rag complexes with RagC/RRAGC or RagD/RRAGD and cycles between an inactive GDP-bound and an active GTP-bound form: RagB/RRAGB is in its active form when GTP-bound RagB/RRAGB forms a complex with GDP-bound RagC/RRAGC (or RagD/RRAGD) and in an inactive form when GDP-bound RagB/RRAGB heterodimerizes with GTP-bound RagC/RRAGC (or RagD/RRAGD). In its GTP-bound active form, promotes the recruitment of mTORC1 to the lysosomes and its subsequent activation by the GTPase RHEB. Involved in the RCC1/Ran-GTPase pathway. This chain is Ras-related GTP-binding protein B, found in Mus musculus (Mouse).